The sequence spans 488 residues: Protein nucleotidyltransferase YdiU (488 aa).

8 residues coordinate ATP: Gly-91, Gly-93, Arg-94, Lys-114, Asp-126, Gly-127, Arg-177, and Arg-184. The Proton acceptor role is filled by Asp-253. Residues Asn-254 and Asp-263 each coordinate Mg(2+). Asp-263 provides a ligand contact to ATP.

The protein belongs to the SELO family. Mg(2+) serves as cofactor. It depends on Mn(2+) as a cofactor.

The catalysed reaction is L-seryl-[protein] + ATP = 3-O-(5'-adenylyl)-L-seryl-[protein] + diphosphate. The enzyme catalyses L-threonyl-[protein] + ATP = 3-O-(5'-adenylyl)-L-threonyl-[protein] + diphosphate. It catalyses the reaction L-tyrosyl-[protein] + ATP = O-(5'-adenylyl)-L-tyrosyl-[protein] + diphosphate. It carries out the reaction L-histidyl-[protein] + UTP = N(tele)-(5'-uridylyl)-L-histidyl-[protein] + diphosphate. The catalysed reaction is L-seryl-[protein] + UTP = O-(5'-uridylyl)-L-seryl-[protein] + diphosphate. The enzyme catalyses L-tyrosyl-[protein] + UTP = O-(5'-uridylyl)-L-tyrosyl-[protein] + diphosphate. Nucleotidyltransferase involved in the post-translational modification of proteins. It can catalyze the addition of adenosine monophosphate (AMP) or uridine monophosphate (UMP) to a protein, resulting in modifications known as AMPylation and UMPylation. The polypeptide is Protein nucleotidyltransferase YdiU (Bacillus cereus (strain ATCC 14579 / DSM 31 / CCUG 7414 / JCM 2152 / NBRC 15305 / NCIMB 9373 / NCTC 2599 / NRRL B-3711)).